The following is a 303-amino-acid chain: MSERTHWRDYLALTKPGVVMLLMVTAVAGMFLATEPAGMVPLATFIPAFVGLSLAMMASAAINQIMDQKIDAIMKRTEKRPLVAGKLTPKAAITFAVLLATASMIMLYFLVNPLTAWLTLFGFVGYAFIYTLYLKRATPQNIVIGGIAGAIPPLLGWTAVTGEAHPYAWLLVLIIFVWTPPHFWALAIHRRDEYAKADIPMLPVTHGIPFTRESVLYYTILLFICTLLPYLTGMSDLIYLLSALILGLVFLYHAVRLRFSEDPKLPMKTFGYSITYLFALFTALLVDHYLPVTPANVASWLGA.

9 helical membrane passes run 17–37 (GVVM…TEPA), 42–62 (LATF…SAAI), 91–111 (AAIT…YFLV), 114–134 (LTAW…TLYL), 142–162 (IVIG…AVTG), 168–188 (AWLL…ALAI), 208–228 (IPFT…CTLL), 231–251 (LTGM…LVFL), and 270–290 (FGYS…DHYL).

It belongs to the UbiA prenyltransferase family. Protoheme IX farnesyltransferase subfamily.

Its subcellular location is the cell inner membrane. The enzyme catalyses heme b + (2E,6E)-farnesyl diphosphate + H2O = Fe(II)-heme o + diphosphate. The protein operates within porphyrin-containing compound metabolism; heme O biosynthesis; heme O from protoheme: step 1/1. Converts heme B (protoheme IX) to heme O by substitution of the vinyl group on carbon 2 of heme B porphyrin ring with a hydroxyethyl farnesyl side group. This chain is Protoheme IX farnesyltransferase, found in Alcanivorax borkumensis (strain ATCC 700651 / DSM 11573 / NCIMB 13689 / SK2).